The primary structure comprises 326 residues: Malate dehydrogenase (326 aa).

Position 12-18 (12-18) interacts with NAD(+); sequence GGTGQIA. Residues arginine 93 and arginine 99 each coordinate substrate. Residues asparagine 106, glutamine 113, and 130–132 each bind NAD(+); that span reads VGN. Substrate-binding residues include asparagine 132 and arginine 163. Histidine 188 (proton acceptor) is an active-site residue.

This sequence belongs to the LDH/MDH superfamily. MDH type 2 family.

It carries out the reaction (S)-malate + NAD(+) = oxaloacetate + NADH + H(+). Catalyzes the reversible oxidation of malate to oxaloacetate. In Chlamydia trachomatis serovar D (strain ATCC VR-885 / DSM 19411 / UW-3/Cx), this protein is Malate dehydrogenase.